A 255-amino-acid chain; its full sequence is Post-GPI attachment to proteins factor 2 (255 aa).

Helical transmembrane passes span Leu-23 to Leu-43, Leu-111 to Phe-131, Asn-143 to Asn-163, Leu-185 to Ser-205, and Ala-209 to Phe-229.

The protein belongs to the PGAP2 family.

The protein resides in the golgi apparatus membrane. Its subcellular location is the endoplasmic reticulum membrane. In terms of biological role, involved in the lipid remodeling steps of GPI-anchor maturation. Required for stable expression of GPI-anchored proteins at the cell surface. This is Post-GPI attachment to proteins factor 2 from Drosophila melanogaster (Fruit fly).